A 257-amino-acid polypeptide reads, in one-letter code: MKVFPALTSALVALGTAGVEAEHVQRSLVMGGGTVPVGAKTYTVGLRTTAEGDTFCGGALISPTHVLTTATCTASLGSGPAEWAAVGTHYLNGAKDGERLKVVSAQNHTLYNPNNFAYNFAVLTLEKPSKFSPVKLPAADGSDIAPSMSSKLMGWGDTSYPNGARANELQSVELRVVTSNCTYTVGPSEVCAGGEEGKDKCAGDTGGPLIKENGSGDADDILIGLASWGMPCGHKDVASVYARVSAGLEWINSVIKK.

An N-terminal signal peptide occupies residues 1 to 28 (MKVFPALTSALVALGTAGVEAEHVQRSL). Positions 29 to 256 (VMGGGTVPVG…GLEWINSVIK (228 aa)) constitute a Peptidase S1 domain. A disulfide bond links cysteine 56 and cysteine 72. N-linked (GlcNAc...) asparagine glycans are attached at residues asparagine 107 and asparagine 180. 2 cysteine pairs are disulfide-bonded: cysteine 181/cysteine 191 and cysteine 201/cysteine 232. The N-linked (GlcNAc...) asparagine glycan is linked to asparagine 213.

It belongs to the peptidase S1 family. In terms of assembly, interacts with host endoglucanases EGaseA.

Its subcellular location is the secreted. Secreted effector that suppresses host plant glucan elicitor-mediated defense responses. Targets host endoglucanase EGaseA and inhibits the EGaseA-mediated release of elicitor-active glucan oligosaccharides from P.sojae cell walls. This Phytophthora sojae (Soybean stem and root rot agent) protein is Glucanase inhibitor protein 1.